We begin with the raw amino-acid sequence, 455 residues long: Probable ATP-dependent RNA helicase DDX47 (455 aa).

The disordered stretch occupies residues 1 to 21; that stretch reads MAADEEPDSPSGALQTAAEEE. The residue at position 2 (alanine 2) is an N-acetylalanine. The residue at position 9 (serine 9) is a Phosphoserine. The Q motif signature appears at 24-52; the sequence is KTFKDLGVTDVLCEACDQLGWAKPTKIQI. The Helicase ATP-binding domain maps to 55-226; the sequence is IPLALQGRDI…RAALKNPVKC (172 aa). ATP is bound at residue 68–75; it reads AETGSGKT. A Phosphothreonine modification is found at threonine 149. Positions 174–177 match the DEAD box motif; that stretch reads DEAD. In terms of domain architecture, Helicase C-terminal spans 237-397; it reads KLQQYYLFIP…VFPTQDEEVM (161 aa). The interval 412–455 is disordered; it reads MELREHGEKKKRKREDAGDDDDKEGAIGVRNKVAGGKMKKRKGR.

This sequence belongs to the DEAD box helicase family. DDX47/RRP3 subfamily. As to quaternary structure, interacts with AGO1 and AGO2. Interacts with GABARAP. Interacts with NOL8; the interaction is RNA-dependent.

Its subcellular location is the nucleus. The protein localises to the nucleolus. It catalyses the reaction ATP + H2O = ADP + phosphate + H(+). Involved in apoptosis. May have a role in rRNA processing and mRNA splicing. Associates with pre-rRNA precursors. The sequence is that of Probable ATP-dependent RNA helicase DDX47 (Ddx47) from Mus musculus (Mouse).